The primary structure comprises 597 residues: Protein Spindly (597 aa).

At methionine 1 the chain carries N-acetylmethionine. The stretch at 1 to 445 (MEADITNLRN…LKLKYEPEER (445 aa)) forms a coiled coil. Serine 508 and serine 547 each carry phosphoserine. Residues 531-597 (PASTEVLHEQ…STPEMQCPQQ (67 aa)) are disordered. The span at 540-549 (QSGNTPSSPR) shows a compositional bias: polar residues. A compositionally biased stretch (basic and acidic residues) spans 550 to 574 (LTEESRLPTKVKERKEATSKLEKGA). A compositionally biased stretch (polar residues) spans 583–597 (YVSSKSTPEMQCPQQ).

This sequence belongs to the Spindly family. As to quaternary structure, interacts with KNTC1 and ZW10. These interactions appear weak and may be transient or indirect. Interacts with dynein intermediate chain and dynactin (DCTN1). Interacts with the catalytically active form of USP45. Post-translationally, monoubiquitinated with'Lys-48' linkage. Deubiquitinated by USP45.

It localises to the cytoplasm. The protein localises to the cytoskeleton. The protein resides in the microtubule organizing center. Its subcellular location is the centrosome. It is found in the chromosome. It localises to the centromere. The protein localises to the kinetochore. The protein resides in the nucleus. Its subcellular location is the spindle pole. Functionally, required for the localization of dynein and dynactin to the mitotic kintochore. Dynein is believed to control the initial lateral interaction between the kinetochore and spindle microtubules and to facilitate the subsequent formation of end-on kinetochore-microtubule attachments mediated by the NDC80 complex. Also required for correct spindle orientation. Does not appear to be required for the removal of spindle assembly checkpoint (SAC) proteins from the kinetochore upon bipolar spindle attachment. Acts as an adapter protein linking the dynein motor complex to various cargos and converts dynein from a non-processive to a highly processive motor in the presence of dynactin. Facilitates the interaction between dynein and dynactin and activates dynein processivity (the ability to move along a microtubule for a long distance without falling off the track). Plays a role in cell migration. This Rattus norvegicus (Rat) protein is Protein Spindly (Spdl1).